A 408-amino-acid chain; its full sequence is 1-deoxy-D-xylulose 5-phosphate reductoisomerase (408 aa).

8 residues coordinate NADPH: T27, G28, S29, I30, A53, R54, N55, and N140. K141 is a binding site for 1-deoxy-D-xylulose 5-phosphate. E142 is a binding site for NADPH. D166 lines the Mn(2+) pocket. Positions 167, 168, 192, and 215 each coordinate 1-deoxy-D-xylulose 5-phosphate. E168 contributes to the Mn(2+) binding site. NADPH is bound at residue G221. Positions 228, 233, 234, and 237 each coordinate 1-deoxy-D-xylulose 5-phosphate. Mn(2+) is bound at residue E237.

The protein belongs to the DXR family. The cofactor is Mg(2+). Requires Mn(2+) as cofactor.

The enzyme catalyses 2-C-methyl-D-erythritol 4-phosphate + NADP(+) = 1-deoxy-D-xylulose 5-phosphate + NADPH + H(+). It functions in the pathway isoprenoid biosynthesis; isopentenyl diphosphate biosynthesis via DXP pathway; isopentenyl diphosphate from 1-deoxy-D-xylulose 5-phosphate: step 1/6. Catalyzes the NADPH-dependent rearrangement and reduction of 1-deoxy-D-xylulose-5-phosphate (DXP) to 2-C-methyl-D-erythritol 4-phosphate (MEP). The protein is 1-deoxy-D-xylulose 5-phosphate reductoisomerase of Nitratidesulfovibrio vulgaris (strain ATCC 29579 / DSM 644 / CCUG 34227 / NCIMB 8303 / VKM B-1760 / Hildenborough) (Desulfovibrio vulgaris).